A 307-amino-acid chain; its full sequence is Ribosomal RNA small subunit methyltransferase H (307 aa).

S-adenosyl-L-methionine-binding positions include 34–36 (GGH), aspartate 53, leucine 88, aspartate 102, and glutamine 109.

It belongs to the methyltransferase superfamily. RsmH family.

The protein resides in the cytoplasm. It carries out the reaction cytidine(1402) in 16S rRNA + S-adenosyl-L-methionine = N(4)-methylcytidine(1402) in 16S rRNA + S-adenosyl-L-homocysteine + H(+). Its function is as follows. Specifically methylates the N4 position of cytidine in position 1402 (C1402) of 16S rRNA. This chain is Ribosomal RNA small subunit methyltransferase H, found in Sulfurimonas denitrificans (strain ATCC 33889 / DSM 1251) (Thiomicrospira denitrificans (strain ATCC 33889 / DSM 1251)).